Reading from the N-terminus, the 119-residue chain is Large ribosomal subunit protein eL31y (119 aa).

The protein belongs to the eukaryotic ribosomal protein eL31 family.

The polypeptide is Large ribosomal subunit protein eL31y (RPL31B) (Arabidopsis thaliana (Mouse-ear cress)).